A 62-amino-acid polypeptide reads, in one-letter code: Paralithocin 1 (62 aa).

The signal sequence occupies residues 1–23; it reads MGPMKVLLVLLVVMVAAPHIADA. 4 disulfide bridges follow: C29-C55, C33-C51, C37-C49, and C42-C52. The residue at position 61 (Y61) is a Tyrosine amide; partial.

Belongs to the paralithocin family. Post-translationally, the amidated form is probably the active form.

In terms of biological role, has weak antibacterial activity, mainly against marine Gram-positive bacteria like C.maltaromaticum (MIC=200 uM), C.mobile (MIC=100 uM), C.divergens (MIC=200 uM) and C.funditum (MIC=200 uM) but also against C.glutamicum (MIC=50 uM). Has very little or no activity against Gram-negative bacteria. This is Paralithocin 1 from Paralithodes camtschaticus (Red king crab).